A 348-amino-acid chain; its full sequence is Protein RecA (348 aa).

Residue 65 to 72 (GPESSGKT) coordinates ATP. Residues 326–348 (QMGSESLSSSSDDDDIKEESGEE) are disordered. The segment covering 336-348 (SDDDDIKEESGEE) has biased composition (acidic residues).

Belongs to the RecA family.

The protein localises to the cytoplasm. Can catalyze the hydrolysis of ATP in the presence of single-stranded DNA, the ATP-dependent uptake of single-stranded DNA by duplex DNA, and the ATP-dependent hybridization of homologous single-stranded DNAs. It interacts with LexA causing its activation and leading to its autocatalytic cleavage. The protein is Protein RecA of Campylobacter hominis (strain ATCC BAA-381 / DSM 21671 / CCUG 45161 / LMG 19568 / NCTC 13146 / CH001A).